The following is a 68-amino-acid chain: KEGYLVDYHTGCKYTCAKLGDNDYCVRECRLRYYQSAHGYCYAFACWCTHLYEQAVVWPLPNKRCKGK.

The region spanning 1–66 (KEGYLVDYHT…VWPLPNKRCK (66 aa)) is the LCN-type CS-alpha/beta domain. Disulfide bonds link Cys12/Cys65, Cys16/Cys41, Cys25/Cys46, and Cys29/Cys48. Position 66 is a lysine amide (Lys66).

It belongs to the long (4 C-C) scorpion toxin superfamily. Sodium channel inhibitor family. Beta subfamily. As to expression, expressed by the venom gland.

It localises to the secreted. Beta toxins bind voltage-independently at site-4 of sodium channels (Nav) and shift the voltage of activation toward more negative potentials thereby affecting sodium channel activation and promoting spontaneous and repetitive firing. Inhibits sodium channels Nav1.4/SCN4A, Nav1.5/SCN5A and Nav1.6/SCN8A. Also has a weak inhibitory effect on Nav1.2/SCN2A. Is lethal to mice. The chain is Beta-toxin Cl13 from Centruroides limpidus (Mexican scorpion).